We begin with the raw amino-acid sequence, 537 residues long: Hexosyltransferase GAUT11 (537 aa).

Residues Met-1 to Leu-16 lie on the Cytoplasmic side of the membrane. The helical; Signal-anchor for type II membrane protein transmembrane segment at Ser-17–Val-37 threads the bilayer. The Lumenal segment spans residues Gln-38–Ala-537. N-linked (GlcNAc...) asparagine glycans are attached at residues Asn-66, Asn-247, Asn-299, Asn-403, Asn-436, and Asn-525.

The protein belongs to the glycosyltransferase 8 family. Monomer. Expressed in roots, inflorescences, siliques, seeds, leaves and stems.

It localises to the golgi apparatus membrane. It catalyses the reaction [(1-&gt;4)-alpha-D-galacturonosyl](n) + UDP-alpha-D-galacturonate = [(1-&gt;4)-alpha-D-galacturonosyl](n+1) + UDP + H(+). It participates in glycan metabolism; pectin biosynthesis. In terms of biological role, glycosyltransferase involved in pectin and/or xylans biosynthesis in cell walls. Required for the biosynthesis of pectin in seed coat epidermal (SCE) cells. Collaboratively with MUCI70, essential for the accumulation of seed mucilage, a gelatinous wall rich in unbranched rhamnogalacturonan I (RG I), and for shaping the surface morphology of seeds. Catalyzes homogalacturonan (HG) elongation by acting as an HG alpha-1,4 galacturonic acid transferase. The protein is Hexosyltransferase GAUT11 of Arabidopsis thaliana (Mouse-ear cress).